The chain runs to 352 residues: Anthranilate phosphoribosyltransferase (352 aa).

5-phospho-alpha-D-ribose 1-diphosphate is bound by residues glycine 83, 86–87, threonine 91, 93–96, 111–119, and alanine 123; these read GD, NIST, and KHGGRSVSS. Residue glycine 83 participates in anthranilate binding. A Mg(2+)-binding site is contributed by serine 95. Residue arginine 169 participates in anthranilate binding. Residues aspartate 228 and glutamate 229 each coordinate Mg(2+).

This sequence belongs to the anthranilate phosphoribosyltransferase family. As to quaternary structure, homodimer. It depends on Mg(2+) as a cofactor.

It catalyses the reaction N-(5-phospho-beta-D-ribosyl)anthranilate + diphosphate = 5-phospho-alpha-D-ribose 1-diphosphate + anthranilate. The protein operates within amino-acid biosynthesis; L-tryptophan biosynthesis; L-tryptophan from chorismate: step 2/5. In terms of biological role, catalyzes the transfer of the phosphoribosyl group of 5-phosphorylribose-1-pyrophosphate (PRPP) to anthranilate to yield N-(5'-phosphoribosyl)-anthranilate (PRA). The protein is Anthranilate phosphoribosyltransferase of Neisseria meningitidis serogroup A / serotype 4A (strain DSM 15465 / Z2491).